The chain runs to 257 residues: Hydroxyacylglutathione hydrolase (257 aa).

Histidine 54, histidine 56, aspartate 58, histidine 59, histidine 113, aspartate 137, and histidine 175 together coordinate Zn(2+).

This sequence belongs to the metallo-beta-lactamase superfamily. Glyoxalase II family. In terms of assembly, monomer. Zn(2+) is required as a cofactor.

It catalyses the reaction an S-(2-hydroxyacyl)glutathione + H2O = a 2-hydroxy carboxylate + glutathione + H(+). It functions in the pathway secondary metabolite metabolism; methylglyoxal degradation; (R)-lactate from methylglyoxal: step 2/2. Functionally, thiolesterase that catalyzes the hydrolysis of S-D-lactoyl-glutathione to form glutathione and D-lactic acid. The sequence is that of Hydroxyacylglutathione hydrolase from Rippkaea orientalis (strain PCC 8801 / RF-1) (Cyanothece sp. (strain PCC 8801)).